Consider the following 158-residue polypeptide: Phosphopantetheine adenylyltransferase (158 aa).

Residue serine 9 participates in substrate binding. Residues 9 to 10 and histidine 17 each bind ATP; that span reads SF. 3 residues coordinate substrate: lysine 41, valine 73, and lysine 87. ATP is bound by residues 88–90, glutamate 98, and 122–128; these read GLR and YSFVSSS.

It belongs to the bacterial CoaD family. Homohexamer. Mg(2+) serves as cofactor.

The protein localises to the cytoplasm. The catalysed reaction is (R)-4'-phosphopantetheine + ATP + H(+) = 3'-dephospho-CoA + diphosphate. It functions in the pathway cofactor biosynthesis; coenzyme A biosynthesis; CoA from (R)-pantothenate: step 4/5. In terms of biological role, reversibly transfers an adenylyl group from ATP to 4'-phosphopantetheine, yielding dephospho-CoA (dPCoA) and pyrophosphate. This chain is Phosphopantetheine adenylyltransferase, found in Mycobacterium sp. (strain JLS).